A 509-amino-acid chain; its full sequence is H/ACA ribonucleoprotein complex subunit DKC1 (509 aa).

The disordered stretch occupies residues 1 to 24 (MADAEVITFPKKHKKKKDRKPLQE). Alanine 2 is subject to N-acetylalanine. The tract at residues 2–21 (ADAEVITFPKKHKKKKDRKP) is nucleolar localization. The span at 10–19 (PKKHKKKKDR) shows a compositional bias: basic residues. Residues lysine 20, lysine 39, and lysine 43 each participate in a glycyl lysine isopeptide (Lys-Gly) (interchain with G-Cter in SUMO2) cross-link. Aspartate 125 (nucleophile) is an active-site residue. A Glycyl lysine isopeptide (Lys-Gly) (interchain with G-Cter in SUMO2) cross-link involves residue lysine 191. The PUA domain maps to 297–372 (KRLVMKDSAV…VAKIKRVIME (76 aa)). Phosphoserine is present on serine 387. Lysine 394 is covalently cross-linked (Glycyl lysine isopeptide (Lys-Gly) (interchain with G-Cter in SUMO2)). Lysine 413 participates in a covalent cross-link: Glycyl lysine isopeptide (Lys-Gly) (interchain with G-Cter in SUMO1); alternate. Lysine 413 participates in a covalent cross-link: Glycyl lysine isopeptide (Lys-Gly) (interchain with G-Cter in SUMO2); alternate. Lysine 424 is covalently cross-linked (Glycyl lysine isopeptide (Lys-Gly) (interchain with G-Cter in SUMO2)). Positions 446-509 (KRKRDSESES…KVKVVEEMSE (64 aa)) are nuclear and nucleolar localization. The segment at 447–509 (RKRDSESESD…KVKVVEEMSE (63 aa)) is disordered. Serine 451, serine 453, and serine 455 each carry phosphoserine. Position 458 is a phosphothreonine (threonine 458). Residues 466–476 (EKKKKKDKKPK) show a composition bias toward basic residues. The residue at position 481 (serine 481) is a Phosphoserine. Phosphothreonine is present on threonine 485. Serine 508 is subject to Phosphoserine.

Belongs to the pseudouridine synthase TruB family. Part of the H/ACA small nucleolar ribonucleoprotein (H/ACA snoRNP) complex, which contains NHP2/NOLA2, GAR1/NOLA1, NOP10/NOLA3, and DKC1/NOLA4, which is presumed to be the catalytic subunit. The complex contains a stable core formed by binding of one or two NOP10-DKC1 heterodimers to NHP2; GAR1 subsequently binds to this core via DKC1. The complex binds a box H/ACA small nucleolar RNA (snoRNA), which may target the specific site of modification within the RNA substrate. During assembly, the complex contains NAF1 instead of GAR1/NOLA1. The complex also interacts with TERC, which contains a 3'-terminal domain related to the box H/ACA snoRNAs. Specific interactions with snoRNAs or TERC are mediated by GAR1 and NHP2. Associates with NOLC1/NOPP140. H/ACA snoRNPs interact with the SMN complex, consisting of SMN1 or SMN2, GEMIN2/SIP1, DDX20/GEMIN3, and GEMIN4. This is mediated by interaction between GAR1 and SMN1 or SMN2. The SMN complex may be required for correct assembly of the H/ACA snoRNP complex. Component of the telomerase holoenzyme complex composed of one molecule of TERT, one molecule of WRAP53/TCAB1, two molecules of H/ACA ribonucleoprotein complex subunits DKC1, NOP10, NHP2 and GAR1, and a telomerase RNA template component (TERC). The telomerase holoenzyme complex is associated with TEP1, SMG6/EST1A and POT1. Interacts with SHQ1; this interaction may lead to the stabilization of DKC1, from the time of its synthesis until its association with NOP10, NHP2, and NAF1 at the nascent H/ACA RNA. Interacts with HMBOX1. Interacts with DHX36. In terms of tissue distribution, ubiquitously expressed, with elevated levels in Purkinje cells, the olfactory bulb, and Leydig cells of the testis.

It is found in the nucleus. It localises to the nucleolus. Its subcellular location is the cajal body. It catalyses the reaction uridine in 5S rRNA = pseudouridine in 5S rRNA. Catalytic subunit of H/ACA small nucleolar ribonucleoprotein (H/ACA snoRNP) complex, which catalyzes pseudouridylation of rRNA. This involves the isomerization of uridine such that the ribose is subsequently attached to C5, instead of the normal N1. Each rRNA can contain up to 100 pseudouridine ('psi') residues, which may serve to stabilize the conformation of rRNAs. Required for ribosome biogenesis and telomere maintenance. Also required for correct processing or intranuclear trafficking of TERC, the RNA component of the telomerase reverse transcriptase (TERT) holoenzyme. This chain is H/ACA ribonucleoprotein complex subunit DKC1 (Dkc1), found in Mus musculus (Mouse).